The chain runs to 463 residues: MPGMEYSTVSKIYGPLMIVEGVKGVAYGEVVEIETESGEKRKGQVLEARENLAIVQVFEGTRDLDVKTTSVRFTGETLKVPVSMDMLGRIFNGIGKPIDGGPEIIPEDRRDVHGAPLNPVARAYPRDFIQTGISAIDGMNTLVRGQKLPIFSGSGLPHNMLAAQIARQAKVLGEEEQFAVVFAAMGITYEEANFFKKSFEETGAIERAVLFLNLADDPAIERIITPRMALTVAEYLAFDYDMQVLVILTDMTNYAEALREISAAREEVPGRRGYPGYMYTDLATIYERGGRVRGKKGSITQMPILTMPDDDITHPIPDLTGYITEGQIVLSRELHRKGIYPPIDVLPSLSRLMKDGIGKGRTREDHPQLAQQLYAAYAEGRSLRDLVAVVGEEALSETDRKYLKFADRFEREFIAQRYDEDRSIFETLDLGWELLAELPESELKRVRKEYILKYHPKYRKRGE.

The protein belongs to the ATPase alpha/beta chains family. In terms of assembly, has multiple subunits with at least A(3), B(3), C, D, E, F, H, I and proteolipid K(x).

It is found in the cell membrane. Functionally, component of the A-type ATP synthase that produces ATP from ADP in the presence of a proton gradient across the membrane. The B chain is a regulatory subunit. In Desulfurococcus sp. (strain SY), this protein is A-type ATP synthase subunit B.